Here is a 163-residue protein sequence, read N- to C-terminus: Ribonuclease P protein subunit p25-like protein (163 aa).

2 disordered regions span residues 1-22 (MEHY…PQLP) and 129-163 (NECG…DTRS). Positions 143–152 (GSMPSSSCGP) are enriched in low complexity. Residues 153 to 163 (RSRRRARDTRS) show a composition bias toward basic residues.

This sequence belongs to the histone-like Alba family.

The protein localises to the nucleus. In terms of biological role, may be a component of ribonuclease P or MRP. The protein is Ribonuclease P protein subunit p25-like protein (RPP25L) of Homo sapiens (Human).